Consider the following 136-residue polypeptide: Small ribosomal subunit protein uS9 (136 aa).

Residues 96–136 (LSPDNRKPLKTEGHLSRDPRAKERRKYGLKKARKAPQFSKR) are disordered. Positions 98–116 (PDNRKPLKTEGHLSRDPRA) are enriched in basic and acidic residues. Over residues 117–136 (KERRKYGLKKARKAPQFSKR) the composition is skewed to basic residues.

This sequence belongs to the universal ribosomal protein uS9 family.

This Prochlorococcus marinus (strain MIT 9515) protein is Small ribosomal subunit protein uS9.